Reading from the N-terminus, the 368-residue chain is Solute carrier family 35 member G1 (368 aa).

10 helical membrane-spanning segments follow: residues 72-92 (GLGLFYTVLSAFLFSVASLFV), 100-120 (AVEISAFRCVVQMLVIIPCLI), 134-154 (LFLFLRGVFGSSAMILMYYAF), 161-181 (DATVIAFSCPVFTSIFAWIFL), 190-210 (AFFTLFAIAGVILIVRPPFIF), 225-245 (IKGTFAAIGHAVLAAITLVIL), 256-276 (LSIWYYVILGLPEAIIILFVI), 289-309 (LFLILIGLLGLGGQIFITKAV), 316-336 (LVAIMKTMDIVFAFIFQIAFF), and 340-360 (PTWWTVGGALCVVVSTTGATI). EamA domains follow at residues 83–205 (FLFS…LIVR) and 236–360 (VLAA…GATI).

It belongs to the TMEM20 family. As to quaternary structure, interacts with STIM1; stimulated by depletion of intracellular calcium. Interacts with ORAI1. Interacts with the plasma membrane calcium-transporting ATPases ATP2B1 and ATP2B4. Interacts with ATP1A1, ATP2A2, KPNB1 and XPO1.

Its subcellular location is the cell membrane. The protein resides in the endoplasmic reticulum membrane. Its function is as follows. May play a role in intracellular calcium sensing and homeostasis. May act as a negative regulator of plasma membrane calcium-transporting ATPases preventing calcium efflux from the cell. In Mus musculus (Mouse), this protein is Solute carrier family 35 member G1 (Slc35g1).